A 584-amino-acid polypeptide reads, in one-letter code: Arginine--tRNA ligase (584 aa).

The 'HIGH' region signature appears at 125-135 (PNIAKEMHVGH).

This sequence belongs to the class-I aminoacyl-tRNA synthetase family. As to quaternary structure, monomer.

It is found in the cytoplasm. The enzyme catalyses tRNA(Arg) + L-arginine + ATP = L-arginyl-tRNA(Arg) + AMP + diphosphate. In Thermosynechococcus vestitus (strain NIES-2133 / IAM M-273 / BP-1), this protein is Arginine--tRNA ligase.